We begin with the raw amino-acid sequence, 127 residues long: V-type proton ATPase subunit F (127 aa).

The protein belongs to the V-ATPase F subunit family. As to quaternary structure, V-ATPase is a heteromultimeric enzyme made up of two complexes: the ATP-hydrolytic V1 complex and the proton translocation V0 complex. The V1 complex consists of three catalytic AB heterodimers that form a heterohexamer, three peripheral stalks each consisting of EG heterodimers, one central rotor including subunits D and F, and the regulatory subunits C and H. The proton translocation complex V0 consists of the proton transport subunit a, a ring of proteolipid subunits c9c'', rotary subunit d, subunits e and f, and the accessory subunits VhaAC45 and ATP6AP2.

Its function is as follows. Subunit of the V1 complex of vacuolar(H+)-ATPase (V-ATPase), a multisubunit enzyme composed of a peripheral complex (V1) that hydrolyzes ATP and a membrane integral complex (V0) that translocates protons. V-ATPase is responsible for acidifying and maintaining the pH of intracellular compartments and in some cell types, is targeted to the plasma membrane, where it is responsible for acidifying the extracellular environment. The sequence is that of V-type proton ATPase subunit F from Aedes aegypti (Yellowfever mosquito).